Reading from the N-terminus, the 429-residue chain is Glutamate-1-semialdehyde 2,1-aminomutase 2 (429 aa).

Position 268 is an N6-(pyridoxal phosphate)lysine (K268).

This sequence belongs to the class-III pyridoxal-phosphate-dependent aminotransferase family. HemL subfamily. In terms of assembly, homodimer. Requires pyridoxal 5'-phosphate as cofactor.

The protein localises to the cytoplasm. It catalyses the reaction (S)-4-amino-5-oxopentanoate = 5-aminolevulinate. It functions in the pathway porphyrin-containing compound metabolism; protoporphyrin-IX biosynthesis; 5-aminolevulinate from L-glutamyl-tRNA(Glu): step 2/2. This is Glutamate-1-semialdehyde 2,1-aminomutase 2 from Staphylococcus aureus (strain USA300).